The following is a 393-amino-acid chain: tRNA (guanine-N(7)-)-methyltransferase (393 aa).

The S-adenosyl-L-methionine site is built by Glu-124, Glu-149, and Asp-176. Residue Asp-232 coordinates substrate.

It belongs to the class I-like SAM-binding methyltransferase superfamily. TrmB family.

It carries out the reaction guanosine(46) in tRNA + S-adenosyl-L-methionine = N(7)-methylguanosine(46) in tRNA + S-adenosyl-L-homocysteine. It participates in tRNA modification; N(7)-methylguanine-tRNA biosynthesis. Catalyzes the formation of N(7)-methylguanine at position 46 (m7G46) in tRNA. This chain is tRNA (guanine-N(7)-)-methyltransferase, found in Helicobacter pylori (strain HPAG1).